Reading from the N-terminus, the 638-residue chain is Probable ATP-binding protein YheS (638 aa).

2 ABC transporter domains span residues 2-246 and 313-531; these read IIFS…AQQT and VMIE…STSE. ATP contacts are provided by residues 34–41 and 349–356; these read GKNGCGKS and GKNGAGKS. Residues 525–563 form a disordered region; sequence EQNSTSENKVSEKVGDNENSVQNRKEQKRREAELRQQTA. The segment covering 547–558 has biased composition (basic and acidic residues); it reads NRKEQKRREAEL.

The protein belongs to the ABC transporter superfamily. ABCF family. YheS subfamily.

In terms of biological role, genetic data indicate it may be involved in ribosome assembly or function. In Haemophilus influenzae (strain ATCC 51907 / DSM 11121 / KW20 / Rd), this protein is Probable ATP-binding protein YheS.